A 1458-amino-acid chain; its full sequence is Secretory phospholipase A2 receptor (1458 aa).

The N-terminal stretch at 1–23 is a signal peptide; it reads MLLSLLLLLLLGAPRRCTEGAAA. At 24–1393 the chain is on the extracellular side; that stretch reads ALSPERVLKW…EHPGKGPSHS (1370 aa). 17 cysteine pairs are disulfide-bonded: Cys-49–Cys-62, Cys-87–Cys-104, Cys-176–Cys-202, Cys-190–Cys-217, Cys-258–Cys-352, Cys-328–Cys-344, Cys-404–Cys-499, Cys-476–Cys-491, Cys-615–Cys-632, Cys-697–Cys-794, Cys-772–Cys-786, Cys-838–Cys-935, Cys-912–Cys-927, Cys-1065–Cys-1085, Cys-1207–Cys-1221, Cys-1278–Cys-1373, and Cys-1350–Cys-1365. Residues 49 to 113 enclose the Ricin B-type lectin domain; sequence CIQAGKSVLT…CDSTHVSLRW (65 aa). Asn-91 is a glycosylation site (N-linked (GlcNAc...) asparagine). The region spanning 171-219 is the Fibronectin type-II domain; the sequence is AHGTPCMFPFQYNHQWHHECTREGRQDDSLWCATTSRYERDEKWGFCPD. C-type lectin domains follow at residues 227 to 356, 374 to 502, 511 to 645, 660 to 798, 815 to 939, 954 to 1098, 1117 to 1231, and 1243 to 1376; these read CDAV…KKYL, TDCE…CKKP, SGCQ…KQPV, HPCY…KIPR, LFHQ…KRKT, GTCP…EKIQ, LEYG…AICH, and ELCS…CKMK. N-linked (GlcNAc...) asparagine glycosylation is found at Asn-408, Asn-431, and Asn-452. Residues 1394-1416 traverse the membrane as a helical segment; the sequence is IVPLAVALTLVVILAIITLSFYI. Topologically, residues 1417 to 1458 are cytoplasmic; the sequence is YKQNKGFFRRLAGVGNSYYPTTNFSTIHLEENILISDLEKND. Residues 1432–1438 carry the Endocytosis signal motif; the sequence is NSYYPTT.

In terms of assembly, interacts with sPLA2-IB/PLA2G1B; this interaction mediates intracellular signaling as well as clearance of extracellular sPLA2-IB/PLA2G1B via endocytotic pathway. Interacts with sPLA2-X/PLA2G10; this interaction mediates sPLA2-X/PLA2G10 clearance and inactivation. The secretory phospholipase A2 receptor form may be produced by the action of metalloproteinases. It contains all extracellular domains and only lacks transmembrane and cytosolic regions. It is however unclear whether this form is produced by proteolytic cleavage as suggested by some experiments, or by alternative splicing. Lung, skeletal muscle, brain, kidney and heart.

Its subcellular location is the cell membrane. The protein resides in the secreted. Receptor for secretory phospholipase A2 (sPLA2). Also able to bind to snake PA2-like toxins. Although its precise function remains unclear, binding of sPLA2 to its receptor participates in both positive and negative regulation of sPLA2 functions as well as clearance of sPLA2. Binding of sPLA2-IB/PLA2G1B induces various effects depending on the cell type, such as activation of the mitogen-activated protein kinase (MAPK) cascade to induce cell proliferation, the production of lipid mediators, selective release of arachidonic acid in bone marrow-derived mast cells. In neutrophils, binding of sPLA2-IB/PLA2G1B can activate p38 MAPK to stimulate elastase release and cell adhesion. May be involved in responses in pro-inflammatory cytokine productions during endotoxic shock. Also has endocytic properties and rapidly internalizes sPLA2 ligands, which is particularly important for the clearance of extracellular sPLA2s to protect their potent enzymatic activities. The soluble secretory phospholipase A2 receptor form is circulating and acts as a negative regulator of sPLA2 functions by blocking the biological functions of sPLA2-IB/PLA2G1B and sPLA2-X/PLA2G10. This Oryctolagus cuniculus (Rabbit) protein is Secretory phospholipase A2 receptor (PLA2R1).